The sequence spans 916 residues: Protein O-GlcNAcase (916 aa).

Residues 1-50 (MVQKESQAALEERESERNANPASVSGASLEPSAAPAPGEDNPSGAGAAAG) form a disordered region. In terms of domain architecture, GH84 spans 60 to 336 (FLCGVVEGFY…TLATWYKSNM (277 aa)). A protein contacts are provided by Gly-67, Lys-98, and Asp-174. The active-site Proton donor is Asp-175. Residues Tyr-219, 278–280 (WDN), Asp-285, and Asn-313 each bind a protein. Position 364 is a phosphoserine (Ser-364). The tract at residues 440 to 480 (QGAALSGEPSALTKEEEKKQPDEEPMDMVVEKQEESEHKSD) is disordered. Basic and acidic residues-rich tracts occupy residues 452–461 (TKEEEKKQPD) and 468–480 (VVEKQEESEHKSD).

The protein belongs to the glycosyl hydrolase 84 family. In terms of assembly, monomer. Interacts with CLOCK. Proteolytically cleaved by caspase-3 during apoptosis. The fragments interact with each other; cleavage does not decrease enzyme activity. Detected in spleen (at protein level). Ubiquitous. Expressed at highest levels in the brain and spleen.

The protein resides in the nucleus. It localises to the cytoplasm. It catalyses the reaction 3-O-(N-acetyl-beta-D-glucosaminyl)-L-seryl-[protein] + H2O = N-acetyl-D-glucosamine + L-seryl-[protein]. The enzyme catalyses 3-O-(N-acetyl-beta-D-glucosaminyl)-L-threonyl-[protein] + H2O = L-threonyl-[protein] + N-acetyl-D-glucosamine. With respect to regulation, inhibited by Cu(2+), Hg(2+), Cd(2+) and Zn(2+) at 1 mM. Not inhibited by Co(2+), Mg(2+), Ca(2+), Mn(2+), Fe(3+) and EDTA. Also inhibited by sodium chloride at 1M and 2-amino-2-hydroxymethyl-1,3-propanediol (trishydroxymethylaminomethane) at 75 mM. In terms of biological role, cleaves GlcNAc but not GalNAc from O-glycosylated proteins. Deglycosylates a large and diverse number of proteins, such as CRYAB, ELK1, GSDMD, LMNB1 and TAB1. Can use p-nitrophenyl-beta-GlcNAc and 4-methylumbelliferone-GlcNAc as substrates but not p-nitrophenyl-beta-GalNAc or p-nitrophenyl-alpha-GlcNAc (in vitro). Does not bind acetyl-CoA and does not have histone acetyltransferase activity. Its function is as follows. Lacks enzyme activity. This Rattus norvegicus (Rat) protein is Protein O-GlcNAcase.